The sequence spans 712 residues: Polyribonucleotide nucleotidyltransferase (712 aa).

The Mg(2+) site is built by D493 and D499. The 60-residue stretch at 560–619 (PRLLTFKVDPEDIGKIIGPGGKTVRGITEATGAKVDISDDGTITVSSSVGGQAEAARAMI) folds into the KH domain. One can recognise an S1 motif domain in the interval 629-697 (GQVYLGKVTR…HKGRINLTRL (69 aa)).

The protein belongs to the polyribonucleotide nucleotidyltransferase family. Mg(2+) is required as a cofactor.

The protein resides in the cytoplasm. The catalysed reaction is RNA(n+1) + phosphate = RNA(n) + a ribonucleoside 5'-diphosphate. Functionally, involved in mRNA degradation. Catalyzes the phosphorolysis of single-stranded polyribonucleotides processively in the 3'- to 5'-direction. The protein is Polyribonucleotide nucleotidyltransferase of Synechococcus sp. (strain JA-2-3B'a(2-13)) (Cyanobacteria bacterium Yellowstone B-Prime).